Consider the following 317-residue polypeptide: Thymidylate synthase (317 aa).

DUMP contacts are provided by residues Arg-24 and Arg-179–Arg-180. Cys-199 functions as the Nucleophile in the catalytic mechanism. DUMP-binding positions include Arg-219–Asp-222, Asn-230, and His-260–Tyr-262. Asp-222 is a (6R)-5,10-methylene-5,6,7,8-tetrahydrofolate binding site. Ala-316 is a binding site for (6R)-5,10-methylene-5,6,7,8-tetrahydrofolate.

This sequence belongs to the thymidylate synthase family. Bacterial-type ThyA subfamily. In terms of assembly, homodimer.

It localises to the cytoplasm. It catalyses the reaction dUMP + (6R)-5,10-methylene-5,6,7,8-tetrahydrofolate = 7,8-dihydrofolate + dTMP. The protein operates within pyrimidine metabolism; dTTP biosynthesis. Functionally, catalyzes the reductive methylation of 2'-deoxyuridine-5'-monophosphate (dUMP) to 2'-deoxythymidine-5'-monophosphate (dTMP) while utilizing 5,10-methylenetetrahydrofolate (mTHF) as the methyl donor and reductant in the reaction, yielding dihydrofolate (DHF) as a by-product. This enzymatic reaction provides an intracellular de novo source of dTMP, an essential precursor for DNA biosynthesis. This is Thymidylate synthase from Oceanobacillus iheyensis (strain DSM 14371 / CIP 107618 / JCM 11309 / KCTC 3954 / HTE831).